The sequence spans 377 residues: Cytochrome b (377 aa).

Helical transmembrane passes span 33–53 (FGSL…FLAM), 77–98 (WLIR…YLHT), 113–133 (WTMG…GYVL), and 178–198 (FFMI…VHLL). Histidine 83 and histidine 97 together coordinate heme b. Heme b-binding residues include histidine 182 and histidine 196. Residue histidine 201 participates in a ubiquinone binding. Transmembrane regions (helical) follow at residues 226-246 (YKDL…SLLS), 288-308 (LGGV…PLSS), 320-340 (FNQI…WIGA), and 347-367 (FIIM…LNPM).

This sequence belongs to the cytochrome b family. The main subunits of complex b-c1 are: cytochrome b, cytochrome c1 and the Rieske protein. Heme b serves as cofactor.

The protein localises to the mitochondrion inner membrane. In terms of biological role, component of the ubiquinol-cytochrome c reductase complex (complex III or cytochrome b-c1 complex) that is part of the mitochondrial respiratory chain. The b-c1 complex mediates electron transfer from ubiquinol to cytochrome c. Contributes to the generation of a proton gradient across the mitochondrial membrane that is then used for ATP synthesis. The sequence is that of Cytochrome b (MT-CYB) from Tetrodontophora bielanensis (Giant springtail).